Here is a 372-residue protein sequence, read N- to C-terminus: Glutamate 5-kinase (372 aa).

K14 is a binding site for ATP. S54, D141, and N153 together coordinate substrate. ATP is bound by residues 173 to 174 and 215 to 221; these read TD and TGGMSTK. The PUA domain maps to 280-358; sequence QGSLVLDAGA…DEIESVLGYD (79 aa).

This sequence belongs to the glutamate 5-kinase family.

The protein resides in the cytoplasm. The enzyme catalyses L-glutamate + ATP = L-glutamyl 5-phosphate + ADP. Its pathway is amino-acid biosynthesis; L-proline biosynthesis; L-glutamate 5-semialdehyde from L-glutamate: step 1/2. Its function is as follows. Catalyzes the transfer of a phosphate group to glutamate to form L-glutamate 5-phosphate. The polypeptide is Glutamate 5-kinase (Shewanella oneidensis (strain ATCC 700550 / JCM 31522 / CIP 106686 / LMG 19005 / NCIMB 14063 / MR-1)).